The sequence spans 203 residues: Small ribosomal subunit protein uS4 (203 aa).

The 66-residue stretch at 93-158 (LRLDNVVYRL…QQLVTRFLDL (66 aa)) folds into the S4 RNA-binding domain.

It belongs to the universal ribosomal protein uS4 family. As to quaternary structure, part of the 30S ribosomal subunit. Contacts protein S5. The interaction surface between S4 and S5 is involved in control of translational fidelity.

In terms of biological role, one of the primary rRNA binding proteins, it binds directly to 16S rRNA where it nucleates assembly of the body of the 30S subunit. Its function is as follows. With S5 and S12 plays an important role in translational accuracy. This is Small ribosomal subunit protein uS4 from Akkermansia muciniphila (strain ATCC BAA-835 / DSM 22959 / JCM 33894 / BCRC 81048 / CCUG 64013 / CIP 107961 / Muc).